The primary structure comprises 502 residues: Probable cytochrome P450 313b1 (502 aa).

Cysteine 449 serves as a coordination point for heme.

Belongs to the cytochrome P450 family. Requires heme as cofactor.

It localises to the endoplasmic reticulum membrane. It is found in the microsome membrane. In terms of biological role, may be involved in the metabolism of insect hormones and in the breakdown of synthetic insecticides. This chain is Probable cytochrome P450 313b1 (Cyp313b1), found in Drosophila melanogaster (Fruit fly).